Here is a 348-residue protein sequence, read N- to C-terminus: Mannonate dehydratase (348 aa).

The protein belongs to the mannonate dehydratase family. The cofactor is Fe(2+). Mn(2+) serves as cofactor.

It carries out the reaction D-mannonate = 2-dehydro-3-deoxy-D-gluconate + H2O. Its pathway is carbohydrate metabolism; pentose and glucuronate interconversion. Functionally, catalyzes the dehydration of D-mannonate. The protein is Mannonate dehydratase of Streptococcus uberis (strain ATCC BAA-854 / 0140J).